The primary structure comprises 591 residues: MPSFFRALFSGLIASQLSWAAPSLLHPLEPRQQPNCNTASNRACWISGSYDITTDYEVKTPLTGVVRQYDLTLTQAENWLGPDGVVKEDVMLVNGNILGPVIHAQWGDTISVTVTNNLKYNGTTIHWHGIRQLNTNLQDGVNGITECPIPPNGGSKTYTFIAHQYGTSWYHSHFSAQYGNGIVGAIQIDGPASLPYDIDLGPLVLSDYYYKTADELVVYTQSNAPPASDNVLFNGTNINPANTTQGQYKTITLTPGKRHRLRIINTSVENNFQVSIVGHSMTVIESDFVPVDSFTTDSLFVGIGQRYDVTIDASQATDNYWMNVTFGGGGFCGKSNNPYPAAIIHYNGASNSHPTNKGVAPADHECLDLLNLVPVVPRSIPTSGFVAASDNTLDVQLSTTTRKWTINGSTLDVDWGHPITQYVINKSTAWPSTDNVWLVEEANQWAYWLIENDPTATGNALPHPIHLHGHDFVVLGRSPNVSPTAQTPYTFTSSDVSSLNGNNPIRRDVVMLPPKGWLLIAFQTTNPGAWLMHCHIAWHVSAGLGNTFLEQPSAFVAGLNTNDVNQLNSQCKSWNAYYPSKDIFKQDDSGV.

The N-terminal stretch at 1-20 (MPSFFRALFSGLIASQLSWA) is a signal peptide. Plastocyanin-like domains lie at 66–189 (VRQY…IQID) and 198–356 (IDLG…HPTN). Asn-121 carries an N-linked (GlcNAc...) asparagine glycan. Residues His-126, His-128, His-171, and His-173 each contribute to the Cu cation site. Disulfide bonds link Cys-147–Cys-571 and Cys-332–Cys-366. 4 N-linked (GlcNAc...) asparagine glycosylation sites follow: Asn-234, Asn-242, Asn-265, and Asn-323. Residues Asn-407 and Asn-425 are each glycosylated (N-linked (GlcNAc...) asparagine). Residues 416–551 (GHPITQYVIN…AGLGNTFLEQ (136 aa)) form the Plastocyanin-like 3 domain. Residues His-463, His-466, His-468, His-533, Cys-534, His-535, and His-539 each coordinate Cu cation.

It belongs to the multicopper oxidase family. The cofactor is Cu cation.

The protein resides in the secreted. The enzyme catalyses 4 hydroquinone + O2 = 4 benzosemiquinone + 2 H2O. In terms of biological role, lignin degradation and detoxification of lignin-derived products. The protein is Laccase (LAC-1) of Cryphonectria parasitica (Chestnut blight fungus).